Consider the following 327-residue polypeptide: DNA-directed RNA polymerase subunit alpha (327 aa).

The tract at residues Met-1–Glu-233 is alpha N-terminal domain (alpha-NTD). Positions Leu-267 to Lys-327 are alpha C-terminal domain (alpha-CTD).

It belongs to the RNA polymerase alpha chain family. In plastids the minimal PEP RNA polymerase catalytic core is composed of four subunits: alpha, beta, beta', and beta''. When a (nuclear-encoded) sigma factor is associated with the core the holoenzyme is formed, which can initiate transcription.

Its subcellular location is the plastid. It is found in the chloroplast. It catalyses the reaction RNA(n) + a ribonucleoside 5'-triphosphate = RNA(n+1) + diphosphate. DNA-dependent RNA polymerase catalyzes the transcription of DNA into RNA using the four ribonucleoside triphosphates as substrates. The polypeptide is DNA-directed RNA polymerase subunit alpha (Draba nemorosa (Woodland whitlowgrass)).